Consider the following 433-residue polypeptide: Signal recognition particle 54 kDa protein (433 aa).

GTP is bound by residues 100–107, 180–184, and 238–241; these read GLQGSGKT, DTAGR, and TKFD.

This sequence belongs to the GTP-binding SRP family. SRP54 subfamily. As to quaternary structure, part of the signal recognition particle protein translocation system, which is composed of SRP and FtsY. Archaeal SRP consists of a 7S RNA molecule of 300 nucleotides and two protein subunits: SRP54 and SRP19.

It is found in the cytoplasm. The catalysed reaction is GTP + H2O = GDP + phosphate + H(+). Functionally, involved in targeting and insertion of nascent membrane proteins into the cytoplasmic membrane. Binds to the hydrophobic signal sequence of the ribosome-nascent chain (RNC) as it emerges from the ribosomes. The SRP-RNC complex is then targeted to the cytoplasmic membrane where it interacts with the SRP receptor FtsY. In Archaeoglobus fulgidus (strain ATCC 49558 / DSM 4304 / JCM 9628 / NBRC 100126 / VC-16), this protein is Signal recognition particle 54 kDa protein.